A 159-amino-acid chain; its full sequence is Putative viral CXC chemokine 2 (159 aa).

Intrachain disulfides connect cysteine 50/cysteine 77 and cysteine 52/cysteine 93.

Belongs to the intercrine alpha (chemokine CxC) family.

This Human cytomegalovirus (strain Towne) (HHV-5) protein is Putative viral CXC chemokine 2 (UL147).